An 807-amino-acid polypeptide reads, in one-letter code: Oxysterol-binding protein 1 (807 aa).

Ala-2 is modified (N-acetylalanine). Residues 61 to 86 (GAGGVAAAGPAPAPPTGGSGGSGAGG) are disordered. The span at 77 to 86 (GGSGGSGAGG) shows a compositional bias: gly residues. The PH domain occupies 88-181 (GSAREGWLFK…WVTALELAKA (94 aa)). 117 to 122 (LSYYRS) is an a 1,2-diacyl-sn-glycero-3-phospho-(1D-myo-inositol 4-phosphate) binding site. Phosphoserine occurs at positions 190, 193, 198, 238, and 240. A coiled-coil region spans residues 291 to 326 (QKSLQYERDQRIRLEETLEQLAKQHNHLERAFRGAT). Gln-314 is a binding site for 20-hydroxycholesterol. A 25-hydroxycholesterol-binding site is contributed by Gln-314. Gln-314 lines the 7beta-hydroxycholesterol pocket. Gln-314 lines the cholesterol pocket. Residue Gln-314 participates in ergosterol binding. The segment at 329–353 (PANTPGNVGSGKDQCCSGKGDMSDE) is disordered. Ser-338, Ser-345, and Ser-351 each carry phosphoserine. The FFAT motif lies at 358–364 (EFFDAPE). Position 377 is a phosphothreonine (Thr-377). Residues Ser-379, Ser-382, Ser-385, Ser-386, and Ser-389 each carry the phosphoserine modification. A 1,2-diacyl-sn-glycero-3-phospho-(1D-myo-inositol 4-phosphate)-binding positions include 493–496 (KPFN) and 522–523 (HH). A disordered region spans residues 710–759 (TAPTDSRLRPDQRLMENGRWDEANAEKQRLEEKQRLSRKKREAEAMKATE). Positions 715 to 759 (SRLRPDQRLMENGRWDEANAEKQRLEEKQRLSRKKREAEAMKATE) are enriched in basic and acidic residues. Positions 730-760 (DEANAEKQRLEEKQRLSRKKREAEAMKATED) form a coiled coil.

This sequence belongs to the OSBP family. Homodimer or homotrimer. Interacts (via FFAT motif) with VAPA. Interacts (via C-terminus) with RELCH (via the third HEAT repeat). Found in a complex composed of RELCH, OSBP1 and RAB11A. Widely expressed.

The protein localises to the cytoplasm. The protein resides in the cytosol. Its subcellular location is the perinuclear region. It localises to the golgi apparatus membrane. It is found in the endoplasmic reticulum membrane. The protein localises to the golgi apparatus. The protein resides in the trans-Golgi network. In terms of biological role, lipid transporter involved in lipid countertransport between the Golgi complex and membranes of the endoplasmic reticulum: specifically exchanges sterol with phosphatidylinositol 4-phosphate (PI4P), delivering sterol to the Golgi in exchange for PI4P, which is degraded by the SAC1/SACM1L phosphatase in the endoplasmic reticulum. Binds cholesterol and a range of oxysterols including 25-hydroxycholesterol. Cholesterol binding promotes the formation of a complex with PP2A and a tyrosine phosphatase which dephosphorylates ERK1/2, whereas 25-hydroxycholesterol causes its disassembly. Regulates cholesterol efflux by decreasing ABCA1 stability. The sequence is that of Oxysterol-binding protein 1 from Homo sapiens (Human).